The sequence spans 195 residues: Keratin-associated protein 4-11 (195 aa).

27 consecutive repeat copies span residues 5 to 9, 24 to 28, 29 to 33, 34 to 38, 44 to 48, 49 to 53, 54 to 58, 59 to 63, 64 to 68, 69 to 73, 74 to 78, 79 to 83, 84 to 88, 89 to 93, 94 to 98, 99 to 103, 104 to 108, 109 to 113, 114 to 118, 119 to 123, 124 to 128, 129 to 133, 134 to 138, 144 to 148, 149 to 153, 154 to 158, and 159 to 163. Positions 5-163 are 27 X 5 AA repeats of C-C-[GIKRQVHEL]-[SPTR]-[STVQRMC]; the sequence is CCGSVCSHQG…CCRPCCCLRP (159 aa).

Belongs to the KRTAP type 4 family. In terms of assembly, interacts with hair keratins. Expressed in the hair follicles.

In terms of biological role, in the hair cortex, hair keratin intermediate filaments are embedded in an interfilamentous matrix, consisting of hair keratin-associated proteins (KRTAP), which are essential for the formation of a rigid and resistant hair shaft through their extensive disulfide bond cross-linking with abundant cysteine residues of hair keratins. The matrix proteins include the high-sulfur and high-glycine-tyrosine keratins. This Homo sapiens (Human) protein is Keratin-associated protein 4-11 (KRTAP4-11).